Here is a 279-residue protein sequence, read N- to C-terminus: Shikimate dehydrogenase (NADP(+)) (279 aa).

Shikimate contacts are provided by residues 21–23 and threonine 68; that span reads SRS. Catalysis depends on lysine 72, which acts as the Proton acceptor. Aspartate 83 contacts NADP(+). Asparagine 92 and aspartate 107 together coordinate shikimate. NADP(+)-binding positions include 132–136, 156–161, and leucine 221; these read GAGGA and NRTVER. Tyrosine 223 is a shikimate binding site. Glycine 244 is a binding site for NADP(+).

It belongs to the shikimate dehydrogenase family. As to quaternary structure, homodimer.

The catalysed reaction is shikimate + NADP(+) = 3-dehydroshikimate + NADPH + H(+). It functions in the pathway metabolic intermediate biosynthesis; chorismate biosynthesis; chorismate from D-erythrose 4-phosphate and phosphoenolpyruvate: step 4/7. Functionally, involved in the biosynthesis of the chorismate, which leads to the biosynthesis of aromatic amino acids. Catalyzes the reversible NADPH linked reduction of 3-dehydroshikimate (DHSA) to yield shikimate (SA). This Nitrobacter winogradskyi (strain ATCC 25391 / DSM 10237 / CIP 104748 / NCIMB 11846 / Nb-255) protein is Shikimate dehydrogenase (NADP(+)).